Here is a 451-residue protein sequence, read N- to C-terminus: Putative metabolite transport protein YyaJ (451 aa).

The Cytoplasmic segment spans residues 1-29 (MNTIFKQKNTHPFSNAANRLDRLPISRVH). The helical transmembrane segment at 30–50 (FQVLTALGIVYFFDLADLFTL) threads the bilayer. Topologically, residues 51-60 (SNVAPALIEH) are extracellular. A helical membrane pass occupies residues 61 to 81 (WGIPLSTIANVTAASFLGMFL). The Cytoplasmic portion of the chain corresponds to 82–97 (GASLGGRLSDRIGRKK). A helical transmembrane segment spans residues 98 to 118 (ALNLFVFVFSIASLCNAAAWD). Residues 119–124 (IPSLMT) lie on the Extracellular side of the membrane. A helical membrane pass occupies residues 125 to 145 (FRFLTGFGVAAAMVITNSYLA). The Cytoplasmic segment spans residues 146–157 (EFFPSSVRGKYI). The chain crosses the membrane as a helical span at residues 158 to 178 (SFCAMIGLIGVPITNIVSAFV). Residues 179–182 (IPLG) are Extracellular-facing. Residues 183–203 (SWGWRLVFVWGAVGLIYFFFI) traverse the membrane as a helical segment. The Cytoplasmic segment spans residues 204-270 (HRLEESPRWH…LLKGRNLKIT (67 aa)). Residues 271-291 (IVLSAVWIFETFGFYGFASWV) traverse the membrane as a helical segment. Residues 292–305 (PSLLKSNGVTMENT) are Extracellular-facing. A helical transmembrane segment spans residues 306 to 326 (LWYNVLHSVGAPLGALLGSMI). Topologically, residues 327 to 333 (SERFQRK) are cytoplasmic. A helical membrane pass occupies residues 334 to 354 (WILAASAFLTAIAGLLYGMTF). Topologically, residues 355-357 (IPI) are extracellular. A helical membrane pass occupies residues 358 to 378 (MIIVFGFIVNITERVFTSNLY). Over 379–396 (AYTSEPYPTEYRSSGSGL) the chain is Cytoplasmic. A helical membrane pass occupies residues 397–417 (AYGLGRFSNIFGSLLVGFIAV). Residues 418-421 (QLGY) lie on the Extracellular side of the membrane. A helical membrane pass occupies residues 422–442 (ISVFLFIGGCWLACSLLLIFF). At 443-451 (GPNTNAKQI) the chain is on the cytoplasmic side.

Belongs to the major facilitator superfamily. Sugar transporter (TC 2.A.1.1) family.

It localises to the cell membrane. The chain is Putative metabolite transport protein YyaJ (yyaJ) from Bacillus subtilis (strain 168).